The chain runs to 50 residues: Small ribosomal subunit protein eS31 (50 aa).

4 residues coordinate Zn(2+): Cys22, Cys25, Cys40, and Cys43. The C4-type zinc-finger motif lies at Cys22–Cys43.

Belongs to the eukaryotic ribosomal protein eS31 family. As to quaternary structure, part of the 30S ribosomal subunit. Requires Zn(2+) as cofactor.

This Pyrococcus furiosus (strain ATCC 43587 / DSM 3638 / JCM 8422 / Vc1) protein is Small ribosomal subunit protein eS31.